The sequence spans 253 residues: 3-deoxy-manno-octulosonate cytidylyltransferase (253 aa).

It belongs to the KdsB family.

It is found in the cytoplasm. It catalyses the reaction 3-deoxy-alpha-D-manno-oct-2-ulosonate + CTP = CMP-3-deoxy-beta-D-manno-octulosonate + diphosphate. It participates in nucleotide-sugar biosynthesis; CMP-3-deoxy-D-manno-octulosonate biosynthesis; CMP-3-deoxy-D-manno-octulosonate from 3-deoxy-D-manno-octulosonate and CTP: step 1/1. The protein operates within bacterial outer membrane biogenesis; lipopolysaccharide biosynthesis. Activates KDO (a required 8-carbon sugar) for incorporation into bacterial lipopolysaccharide in Gram-negative bacteria. The chain is 3-deoxy-manno-octulosonate cytidylyltransferase from Acinetobacter baumannii (strain AYE).